Reading from the N-terminus, the 360-residue chain is Mitogen-activated protein kinase 14 (360 aa).

Serine 2 is subject to N-acetylserine. Serine 2 is subject to Phosphoserine. Threonine 16 is subject to Phosphothreonine. The Protein kinase domain maps to 24-308; it reads YQNLSPVGSG…AAQALAHAYF (285 aa). ATP contacts are provided by residues 30 to 38 and lysine 53; that span reads VGSGAYGSV. At lysine 53 the chain carries N6-acetyllysine. The active-site Proton acceptor is the aspartate 150. Lysine 152 carries the post-translational modification N6-acetyllysine. A Phosphothreonine modification is found at threonine 180. The short motif at 180 to 182 is the TXY element; that stretch reads TGY. Position 182 is a phosphotyrosine (tyrosine 182). The residue at position 323 (tyrosine 323) is a Phosphotyrosine; by ZAP70.

This sequence belongs to the protein kinase superfamily. CMGC Ser/Thr protein kinase family. MAP kinase subfamily. In terms of assembly, component of a signaling complex containing at least AKAP13, PKN1, MAPK14, ZAK and MAP2K3. Within this complex, AKAP13 interacts directly with PKN1, which in turn recruits MAPK14, MAP2K3 and ZAK. Binds to a kinase interaction motif within the protein tyrosine phosphatase, PTPRR. This interaction retains MAPK14 in the cytoplasm and prevents nuclear accumulation. Interacts with SPAG9 and GADD45A. Interacts with CDC25B, CDC25C, DUSP1, DUSP10, DUSP16, NP60, SUPT20H and TAB1. Interacts with casein kinase II subunits CSNK2A1 and CSNK2B. Interacts with PPM1D. Interacts with CDK5RAP3; recruits PPM1D to MAPK14 and may regulate its dephosphorylation. Interacts with DUSP2; this interaction does not lead to catalytic activation of DUSP2 and dephosphrylation of MAPK14. The cofactor is Mg(2+). Dually phosphorylated on Thr-180 and Tyr-182 by the MAP2Ks MAP2K3/MKK3, MAP2K4/MKK4 and MAP2K6/MKK6 in response to inflammatory cytokines, environmental stress or growth factors, which activates the enzyme. Dual phosphorylation can also be mediated by TAB1-mediated autophosphorylation. TCR engagement in T-cells also leads to Tyr-323 phosphorylation by ZAP70. Dephosphorylated and inactivated by DUPS1, DUSP10 and DUSP16. PPM1D also mediates dephosphorylation and inactivation of MAPK14. In terms of processing, acetylated at Lys-53 and Lys-152 by KAT2B and EP300. Acetylation at Lys-53 increases the affinity for ATP and enhances kinase activity. Lys-53 and Lys-152 are deacetylated by HDAC3. Post-translationally, ubiquitinated. Ubiquitination leads to degradation by the proteasome pathway.

The protein localises to the cytoplasm. It is found in the nucleus. It carries out the reaction L-seryl-[protein] + ATP = O-phospho-L-seryl-[protein] + ADP + H(+). It catalyses the reaction L-threonyl-[protein] + ATP = O-phospho-L-threonyl-[protein] + ADP + H(+). Activated by cell stresses such as DNA damage, heat shock, osmotic shock, anisomycin and sodium arsenite, as well as pro-inflammatory stimuli such as bacterial lipopolysaccharide (LPS) and interleukin-1. Activation occurs through dual phosphorylation of Thr-180 and Tyr-182 by either of two dual specificity kinases, MAP2K3/MKK3 or MAP2K6/MKK6, and potentially also MAP2K4/MKK4, as well as by TAB1-mediated autophosphorylation. MAPK14 phosphorylated on both Thr-180 and Tyr-182 is 10-20-fold more active than MAPK14 phosphorylated only on Thr-180, whereas MAPK14 phosphorylated on Tyr-182 alone is inactive. whereas Thr-180 is necessary for catalysis, Tyr-182 may be required for auto-activation and substrate recognition. Phosphorylated at Tyr-323 by ZAP70 in an alternative activation pathway in response to TCR signaling in T-cells. This alternative pathway is inhibited by GADD45A. Inhibited by dual specificity phosphatases, such as DUSP1, DUSP10, and DUSP16. Specifically inhibited by the binding of pyridinyl-imidazole compounds, which are cytokine-suppressive anti-inflammatory drugs (CSAID). SB203580 is an inhibitor of MAPK14. Its function is as follows. Serine/threonine kinase which acts as an essential component of the MAP kinase signal transduction pathway. MAPK14 is one of the four p38 MAPKs which play an important role in the cascades of cellular responses evoked by extracellular stimuli such as pro-inflammatory cytokines or physical stress leading to direct activation of transcription factors. Accordingly, p38 MAPKs phosphorylate a broad range of proteins and it has been estimated that they may have approximately 200 to 300 substrates each. Some of the targets are downstream kinases which are activated through phosphorylation and further phosphorylate additional targets. RPS6KA5/MSK1 and RPS6KA4/MSK2 can directly phosphorylate and activate transcription factors such as CREB1, ATF1, the NF-kappa-B isoform RELA/NFKB3, STAT1 and STAT3, but can also phosphorylate histone H3 and the nucleosomal protein HMGN1. RPS6KA5/MSK1 and RPS6KA4/MSK2 play important roles in the rapid induction of immediate-early genes in response to stress or mitogenic stimuli, either by inducing chromatin remodeling or by recruiting the transcription machinery. On the other hand, two other kinase targets, MAPKAPK2/MK2 and MAPKAPK3/MK3, participate in the control of gene expression mostly at the post-transcriptional level, by phosphorylating ZFP36 (tristetraprolin) and ELAVL1, and by regulating EEF2K, which is important for the elongation of mRNA during translation. MKNK1/MNK1 and MKNK2/MNK2, two other kinases activated by p38 MAPKs, regulate protein synthesis by phosphorylating the initiation factor EIF4E2. MAPK14 also interacts with casein kinase II, leading to its activation through autophosphorylation and further phosphorylation of TP53/p53. In the cytoplasm, the p38 MAPK pathway is an important regulator of protein turnover. For example, CFLAR is an inhibitor of TNF-induced apoptosis whose proteasome-mediated degradation is regulated by p38 MAPK phosphorylation. In a similar way, MAPK14 phosphorylates the ubiquitin ligase SIAH2, regulating its activity towards EGLN3. MAPK14 may also inhibit the lysosomal degradation pathway of autophagy by interfering with the intracellular trafficking of the transmembrane protein ATG9. Another function of MAPK14 is to regulate the endocytosis of membrane receptors by different mechanisms that impinge on the small GTPase RAB5A. In addition, clathrin-mediated EGFR internalization induced by inflammatory cytokines and UV irradiation depends on MAPK14-mediated phosphorylation of EGFR itself as well as of RAB5A effectors. Ectodomain shedding of transmembrane proteins is regulated by p38 MAPKs as well. In response to inflammatory stimuli, p38 MAPKs phosphorylate the membrane-associated metalloprotease ADAM17. Such phosphorylation is required for ADAM17-mediated ectodomain shedding of TGF-alpha family ligands, which results in the activation of EGFR signaling and cell proliferation. Another p38 MAPK substrate is FGFR1. FGFR1 can be translocated from the extracellular space into the cytosol and nucleus of target cells, and regulates processes such as rRNA synthesis and cell growth. FGFR1 translocation requires p38 MAPK activation. In the nucleus, many transcription factors are phosphorylated and activated by p38 MAPKs in response to different stimuli. Classical examples include ATF1, ATF2, ATF6, ELK1, PTPRH, DDIT3, TP53/p53 and MEF2C and MEF2A. The p38 MAPKs are emerging as important modulators of gene expression by regulating chromatin modifiers and remodelers. The promoters of several genes involved in the inflammatory response, such as IL6, IL8 and IL12B, display a p38 MAPK-dependent enrichment of histone H3 phosphorylation on 'Ser-10' (H3S10ph) in LPS-stimulated myeloid cells. This phosphorylation enhances the accessibility of the cryptic NF-kappa-B-binding sites marking promoters for increased NF-kappa-B recruitment. Phosphorylates CDC25B and CDC25C which is required for binding to 14-3-3 proteins and leads to initiation of a G2 delay after ultraviolet radiation. Phosphorylates TIAR following DNA damage, releasing TIAR from GADD45A mRNA and preventing mRNA degradation. The p38 MAPKs may also have kinase-independent roles, which are thought to be due to the binding to targets in the absence of phosphorylation. Protein O-Glc-N-acylation catalyzed by the OGT is regulated by MAPK14, and, although OGT does not seem to be phosphorylated by MAPK14, their interaction increases upon MAPK14 activation induced by glucose deprivation. This interaction may regulate OGT activity by recruiting it to specific targets such as neurofilament H, stimulating its O-Glc-N-acylation. Required in mid-fetal development for the growth of embryo-derived blood vessels in the labyrinth layer of the placenta. Also plays an essential role in developmental and stress-induced erythropoiesis, through regulation of EPO gene expression. Phosphorylates S100A9 at 'Thr-113'. In Rattus norvegicus (Rat), this protein is Mitogen-activated protein kinase 14.